Here is a 74-residue protein sequence, read N- to C-terminus: UPF0346 protein PEPE_1063 (74 aa).

Belongs to the UPF0346 family.

The chain is UPF0346 protein PEPE_1063 from Pediococcus pentosaceus (strain ATCC 25745 / CCUG 21536 / LMG 10740 / 183-1w).